We begin with the raw amino-acid sequence, 338 residues long: MRVLGIETSCDETGIAVYDDKLGLLSHKLYSQVKLHADYGGVVPELASRDHVRKIVPLIKQALLDANTSANELDGVAYTKGPGLIGALLVGACVGRSLAYAWGKPAVGVHHMEGHLLAPMLEDDAPEYPFVALLVSGGHSMLVKVDGIGRYEVLGESVDDAAGEAFDKTAKLMGLDYPGGPRLAKLASEGVPAGYKFPRPMTDRPGLDFSFSGLKTFTANTIMAEPDDHQTRANIARAFEEAVVDTLAIKCRRALKQTGYNRLVIAGGVSANTRLRETLAELMTSLGGRVYYPRGEFCTDNGAMIAYAGLQRLKAGQVEDLSVKGQPRWPLDSLPAVD.

Positions 111 and 115 each coordinate Fe cation. Substrate is bound by residues 134–138 (LVSGG), Asp-167, Gly-180, and Asn-272. Asp-300 contacts Fe cation.

Belongs to the KAE1 / TsaD family. The cofactor is Fe(2+).

Its subcellular location is the cytoplasm. It carries out the reaction L-threonylcarbamoyladenylate + adenosine(37) in tRNA = N(6)-L-threonylcarbamoyladenosine(37) in tRNA + AMP + H(+). In terms of biological role, required for the formation of a threonylcarbamoyl group on adenosine at position 37 (t(6)A37) in tRNAs that read codons beginning with adenine. Is involved in the transfer of the threonylcarbamoyl moiety of threonylcarbamoyl-AMP (TC-AMP) to the N6 group of A37, together with TsaE and TsaB. TsaD likely plays a direct catalytic role in this reaction. This chain is tRNA N6-adenosine threonylcarbamoyltransferase, found in Shewanella denitrificans (strain OS217 / ATCC BAA-1090 / DSM 15013).